Consider the following 202-residue polypeptide: Syndecan-4 (202 aa).

The first 23 residues, 1-23, serve as a signal peptide directing secretion; that stretch reads MAPVCLFAPLLLLLLGGFPVAPG. The Extracellular portion of the chain corresponds to 24–149; that stretch reads ESIRETEVID…QGSNIFERTE (126 aa). Disordered regions lie at residues 42–76 and 89–138; these read YFSG…TEEP and LDNH…MSST. Residue Ser-44 is glycosylated (O-linked (Xyl...) (glycosaminoglycan) serine). Residues 48–62 show a composition bias toward acidic residues; that stretch reads PDDEDAGGLEQDSDF. O-linked (Xyl...) (glycosaminoglycan) serine glycosylation is found at Ser-65 and Ser-67. Over residues 105-121 the composition is skewed to basic and acidic residues; sequence SEPKELEENEVIPKRVP. Residues 150-174 traverse the membrane as a helical segment; that stretch reads VLAALIVGGVVGILFAVFLILLLVY. Over 175–202 the chain is Cytoplasmic; that stretch reads RMKKKDEGSYDLGKKPIYKKAPTNEFYA.

The protein belongs to the syndecan proteoglycan family. Homodimer. Interacts with CDCP1 and SDCBP. Interacts (via its cytoplasmic domain) with GIPC (via its PDZ domain). Interacts (via its cytoplasmic domain) with NUDT16L1. Interacts with DNM2; this interaction is markedly enhanced at focal ahesion site upon induction of focal adhesions and stress-fiber formation. Post-translationally, shedding is enhanced by a number of factors such as heparanase, thrombin or EGF. Also by stress and wound healing. PMA-mediated shedding is inhibited by TIMP3. O-glycosylated; contains both chondroitin sulfate and heparan sulfate. Ser-44, Ser-65 and Ser-67 can all be modified by either chondroitin sulfate or heparan sulfate, and the protein exists in forms that contain only chondroitin sulfate, only heparan sulfate and both chondroitin sulfate and heparan sulfate.

The protein resides in the membrane. Its subcellular location is the secreted. Its function is as follows. Cell surface proteoglycan which regulates exosome biogenesis in concert with SDCBP and PDCD6IP. This chain is Syndecan-4, found in Rattus norvegicus (Rat).